Reading from the N-terminus, the 298-residue chain is MTKQTEYKRKPEWLKIKLNTNENYTGLKKMMRSKNLHTVCEEAKCPNIHECWAVRKTATFMILGAVCTRACRFCAVKTGLPTELDLQEPERVADSVVQMGLKHVVITAVARDDLKDGGAAVFAETVRAVRRKNPFTSIEVLPSDMGGVEENLKMLMDAKPDILNHNIETVRRLSDRVRARAKYDRSLEFLRRAKEMQPDIPTKSSIMVGLGETREDLIEAMDDLRANNVDILTLGQYLQPSKKHLPVLKYYPPAEFAELKEIALSKGFSHCEAGPLVRSSYHADEQVRSAKEKTAEAK.

Positions 40, 45, 51, 67, 71, 74, and 280 each coordinate [4Fe-4S] cluster. A Radical SAM core domain is found at 53–269 (AVRKTATFMI…KEIALSKGFS (217 aa)).

It belongs to the radical SAM superfamily. Lipoyl synthase family. It depends on [4Fe-4S] cluster as a cofactor.

It localises to the cytoplasm. It carries out the reaction [[Fe-S] cluster scaffold protein carrying a second [4Fe-4S](2+) cluster] + N(6)-octanoyl-L-lysyl-[protein] + 2 oxidized [2Fe-2S]-[ferredoxin] + 2 S-adenosyl-L-methionine + 4 H(+) = [[Fe-S] cluster scaffold protein] + N(6)-[(R)-dihydrolipoyl]-L-lysyl-[protein] + 4 Fe(3+) + 2 hydrogen sulfide + 2 5'-deoxyadenosine + 2 L-methionine + 2 reduced [2Fe-2S]-[ferredoxin]. It participates in protein modification; protein lipoylation via endogenous pathway; protein N(6)-(lipoyl)lysine from octanoyl-[acyl-carrier-protein]. In terms of biological role, catalyzes the radical-mediated insertion of two sulfur atoms into the C-6 and C-8 positions of the octanoyl moiety bound to the lipoyl domains of lipoate-dependent enzymes, thereby converting the octanoylated domains into lipoylated derivatives. The chain is Lipoyl synthase from Bacillus thuringiensis (strain Al Hakam).